We begin with the raw amino-acid sequence, 260 residues long: Thrombin-like enzyme 2 (260 aa).

The first 18 residues, methionine 1 to alanine 18, serve as a signal peptide directing secretion. Residues glutamine 19 to leucine 24 constitute a propeptide that is removed on maturation. The Peptidase S1 domain maps to valine 25–alanine 251. 6 disulfide bridges follow: cysteine 31–cysteine 165, cysteine 52–cysteine 68, cysteine 102–cysteine 258, cysteine 144–cysteine 212, cysteine 176–cysteine 191, and cysteine 202–cysteine 227. Histidine 67 functions as the Charge relay system in the catalytic mechanism. An N-linked (GlcNAc...) asparagine glycan is attached at asparagine 105. The active-site Charge relay system is aspartate 112. 2 N-linked (GlcNAc...) asparagine glycosylation sites follow: asparagine 156 and asparagine 172. Serine 206 acts as the Charge relay system in catalysis. An N-linked (GlcNAc...) asparagine glycan is attached at asparagine 253.

Belongs to the peptidase S1 family. Snake venom subfamily. In terms of assembly, monomer. Expressed by the venom gland.

It localises to the secreted. In terms of biological role, thrombin-like snake venom serine protease. This Trimeresurus albolabris (White-lipped pit viper) protein is Thrombin-like enzyme 2.